The sequence spans 176 residues: Sigma intracellular receptor 2 (176 aa).

Residues 1 to 9 are Cytoplasmic-facing; sequence MGAPATRRC. Residues 10-30 form a helical membrane-spanning segment; the sequence is VEWLLGLYFLSHIPITLFMDL. The region spanning 10–158 is the EXPERA domain; the sequence is VEWLLGLYFL…PYLLIPFILL (149 aa). The Lumenal portion of the chain corresponds to 31–68; sequence QAVLPRELYPVEFRNLLKWYAKEFKDPLLQEPPAWFKS. The chain crosses the membrane as a helical span at residues 69–89; sequence FLFCELVFQLPFFPIATYAFL. Cholesterol-binding residues include V75 and Q77. Topologically, residues 90-99 are cytoplasmic; it reads KGSCKWIRTP. Residues 100–120 form a helical membrane-spanning segment; it reads AIIYSVHTMTTLIPILSTFLF. Positions 108-176 are required for interaction with Hst1/HTN1; it reads MTTLIPILST…YKYEEKRKKK (69 aa). At 121-140 the chain is on the lumenal side; the sequence is EDFSKASGFKGQRPETLHER. Residues 141–161 form a helical membrane-spanning segment; it reads LTLVSVYAPYLLIPFILLIFM. At 162–176 the chain is on the cytoplasmic side; that stretch reads LRSPYYKYEEKRKKK. Residues 172–176 carry the ER retention motif motif; sequence KRKKK.

It belongs to the TMEM97/sigma-2 receptor family. In terms of assembly, homodimer. Interacts with NPC1; the interaction impairs NPC1-mediated cholesterol transport. Interacts with PGRMC1 and LDLR; the interaction increases LDL internalization. Interacts with histatin 1/HTN1; the interaction induces HTN1-stimulating wound healing. Interacts with TSPO. Forms a complex with TSPO and PGRMC1; the interaction occurs in MIA PaCa-2 cells but not in MCF7 cells. As to expression, widely expressed in normal tissues. Expressed in pancreatic, renal, breast, colon, ovarian surface epithelial (OSE) cells. Highly expressed in various proliferating cancer cells.

Its subcellular location is the rough endoplasmic reticulum membrane. It localises to the nucleus membrane. Functionally, sigma-2 receptor which contributes to ameliorate dysfunctional cellular processes and slow degenerative progression by regulating cell functions including cholesterol biosynthesis/trafficking, membrane trafficking, autophagy, lipid membrane-bound protein trafficking, and receptor stabilization at the cell surface. Forms a ternary complex with PGRMC1 receptor and low density lipoprotein receptor/LDLR at the plasma membrane, which increases LDLR-mediated LDL cholesterol internalization. Decreases lysosomal sterol transporter NPC1 availability to the cell, probably through NPC1-binding, hence controlling lipid transport, including cholesterol and LBPA, outside of late endosome/lysosome. Binds regio- and stereoselective ligand 20(S)-hydroxycholesterol (20(S)-OHC) which enhances TMEM97-NPC1 interaction and decreases TMEM97-PGRMC1 and TMEM97-TSPO interactions, thereby linking OHC binding to cholesterol homeostasis. Also able to bind cholesterol. Binds histatin 1 (Hst 1)/HN1 salivary peptide at the ER membrane, which is critical for increasing mitochondria-ER contacts and stimulating Hst1 wound healing properties. May alter the activity of some cytochrome P450 proteins. Although shows homologies with sterol isomerases (EXPERA domain), not able to catalyze sterol isomerization. However, may act as sensors of these molecules. Acts as a quality control factor in the ER, promoting the proteolytic degradation of nonproductive and extramitochondrial precursor proteins in the ER membrane thus removing them from the ER surface. The chain is Sigma intracellular receptor 2 from Homo sapiens (Human).